We begin with the raw amino-acid sequence, 306 residues long: 4-hydroxybenzoate geranyltransferase 2 (306 aa).

A run of 8 helical transmembrane segments spans residues 38–58 (IGSW…ADLG), 61–81 (PKML…GCTI), 119–139 (LFIG…LAIV), 153–173 (ITYW…LLGS), 178–198 (GSVV…WTLV), 229–249 (IWIT…GFIV), 251–271 (IGLP…WQIF), and 285–305 (FVSN…GRLF).

It belongs to the UbiA prenyltransferase family. Mg(2+) is required as a cofactor. In terms of tissue distribution, expressed only in roots.

The protein localises to the endoplasmic reticulum membrane. It carries out the reaction 4-hydroxybenzoate + (2E)-geranyl diphosphate = 3-geranyl-4-hydroxybenzoate + diphosphate. In terms of biological role, prenyltransferase involved in the biosynthesis of shikonin, a naphthoquinone secondary metabolite. Could accept only geranyl diphosphate and not dimethylallyl diphosphate, farnesyl diphosphate, or geranylgeranyl diphosphate as substrate. This Lithospermum erythrorhizon (Purple gromwell) protein is 4-hydroxybenzoate geranyltransferase 2 (PGT-2).